A 472-amino-acid chain; its full sequence is MKFHIITLGCPKNQVDSEGMSSILAAQGHTPVAHADDADVVVVNTCSFIAAAREETLDVLREVAARKTPGQYLVAAGCMAESHSALVAAAPGVDALLSTREWMRIGDVVDTLQREPAVAASSAAREIIPLSSAPASSDDLRVPGAYADWRTAPIRRRITGPSAYLKISDGCNLRCAFCTIPSFKGDMRSKAVGAILGEAQELADAGVKEIVLVAQHLTDYGRDLGLKDGLALLLDELCAVLPKDRWVRLMYAYPHGISERLIATMARHPQICHYLDMPLQHAHPETLRRMHRPPDSDRTRRLIADLRAAMPDIALRSTFIIGFPGETSAEFRALTAFLEEVQFDRVGVFRYSREPGTPAAALPDQIPQRVIERRWHTIMRLQQGISRQRNRRWVGRVIRVLVEGQGQTDDGRLLSVGRSFRDAPEVDGQVLFWGTAATGTFVDVRVTQALDYDLWGEMVEAPADDARSENGT.

The region spanning 1–114 (MKFHIITLGC…IGDVVDTLQR (114 aa)) is the MTTase N-terminal domain. [4Fe-4S] cluster contacts are provided by Cys-10, Cys-46, Cys-78, Cys-171, Cys-175, and Cys-178. Positions 157–388 (RITGPSAYLK…MRLQQGISRQ (232 aa)) constitute a Radical SAM core domain. Residues 391 to 460 (RRWVGRVIRV…DYDLWGEMVE (70 aa)) form the TRAM domain.

This sequence belongs to the methylthiotransferase family. RimO subfamily. The cofactor is [4Fe-4S] cluster.

It is found in the cytoplasm. It catalyses the reaction L-aspartate(89)-[ribosomal protein uS12]-hydrogen + (sulfur carrier)-SH + AH2 + 2 S-adenosyl-L-methionine = 3-methylsulfanyl-L-aspartate(89)-[ribosomal protein uS12]-hydrogen + (sulfur carrier)-H + 5'-deoxyadenosine + L-methionine + A + S-adenosyl-L-homocysteine + 2 H(+). In terms of biological role, catalyzes the methylthiolation of an aspartic acid residue of ribosomal protein uS12. This chain is Ribosomal protein uS12 methylthiotransferase RimO, found in Roseiflexus sp. (strain RS-1).